The chain runs to 159 residues: Eukaryotic translation initiation factor 5A-5 (159 aa).

A compositionally biased stretch (basic and acidic residues) spans 1–12 (MSDEEHHFESKA). The tract at residues 1-23 (MSDEEHHFESKADAGASKTYPQQ) is disordered. The residue at position 52 (Lys52) is a Hypusine.

This sequence belongs to the eIF-5A family. Post-translationally, lys-52 undergoes hypusination, a unique post-translational modification that consists in the addition of a butylamino group from spermidine to lysine side chain, leading to the formation of the unusual amino acid hypusine. eIF-5As are the only known proteins to undergo this modification, which is essential for their function.

Its function is as follows. Translation factor that promotes translation elongation and termination, particularly upon ribosome stalling at specific amino acid sequence contexts. Binds between the exit (E) and peptidyl (P) site of the ribosome and promotes rescue of stalled ribosome: specifically required for efficient translation of polyproline-containing peptides as well as other motifs that stall the ribosome. Acts as a ribosome quality control (RQC) cofactor by joining the RQC complex to facilitate peptidyl transfer during CAT tailing step. This chain is Eukaryotic translation initiation factor 5A-5 (EIF5A5), found in Solanum tuberosum (Potato).